A 934-amino-acid chain; its full sequence is 2-oxoglutarate dehydrogenase E1 component (934 aa).

This sequence belongs to the alpha-ketoglutarate dehydrogenase family. Homodimer. Part of the 2-oxoglutarate dehydrogenase (OGDH) complex composed of E1 (2-oxoglutarate dehydrogenase), E2 (dihydrolipoamide succinyltransferase) and E3 (dihydrolipoamide dehydrogenase); the complex contains multiple copies of the three enzymatic components (E1, E2 and E3). Thiamine diphosphate is required as a cofactor.

It carries out the reaction N(6)-[(R)-lipoyl]-L-lysyl-[protein] + 2-oxoglutarate + H(+) = N(6)-[(R)-S(8)-succinyldihydrolipoyl]-L-lysyl-[protein] + CO2. E1 component of the 2-oxoglutarate dehydrogenase (OGDH) complex which catalyzes the decarboxylation of 2-oxoglutarate, the first step in the conversion of 2-oxoglutarate to succinyl-CoA and CO(2). This is 2-oxoglutarate dehydrogenase E1 component from Staphylococcus epidermidis (strain ATCC 35984 / DSM 28319 / BCRC 17069 / CCUG 31568 / BM 3577 / RP62A).